Here is a 495-residue protein sequence, read N- to C-terminus: ATP synthase subunit beta (495 aa).

G178–T185 is an ATP binding site.

Belongs to the ATPase alpha/beta chains family. F-type ATPases have 2 components, CF(1) - the catalytic core - and CF(0) - the membrane proton channel. CF(1) has five subunits: alpha(3), beta(3), gamma(1), delta(1), epsilon(1). CF(0) has three main subunits: a(1), b(2) and c(9-12). The alpha and beta chains form an alternating ring which encloses part of the gamma chain. CF(1) is attached to CF(0) by a central stalk formed by the gamma and epsilon chains, while a peripheral stalk is formed by the delta and b chains.

It is found in the cell membrane. The enzyme catalyses ATP + H2O + 4 H(+)(in) = ADP + phosphate + 5 H(+)(out). In terms of biological role, produces ATP from ADP in the presence of a proton gradient across the membrane. The catalytic sites are hosted primarily by the beta subunits. The chain is ATP synthase subunit beta from Bifidobacterium animalis subsp. lactis (strain AD011).